The primary structure comprises 227 residues: Large ribosomal subunit protein uL3 (227 aa).

The tract at residues 146-167 (RGPMAHGSKFHRHQGSNGACSS) is disordered.

The protein belongs to the universal ribosomal protein uL3 family. Part of the 50S ribosomal subunit. Forms a cluster with proteins L14 and L19.

One of the primary rRNA binding proteins, it binds directly near the 3'-end of the 23S rRNA, where it nucleates assembly of the 50S subunit. This is Large ribosomal subunit protein uL3 from Agathobacter rectalis (strain ATCC 33656 / DSM 3377 / JCM 17463 / KCTC 5835 / VPI 0990) (Eubacterium rectale).